The sequence spans 1034 residues: Protein ITPRID1 (1034 aa).

Disordered stretches follow at residues 223–290 (KTQQ…PTKP), 442–486 (QVSS…KSMT), and 624–678 (QSSL…SSWS). Composition is skewed to polar residues over residues 443–453 (VSSMTGSQSPT) and 465–476 (HSPASQQDSLQE). The segment covering 477–486 (SYGSKSKSMT) has biased composition (low complexity). Polar residues predominate over residues 669-678 (TDSNAASSWS). The stretch at 843–902 (EMETMKMVCQSFREHLEEIEQHFMGQQALYPRDMSEEEREEAEYLRTLREALRQQVAELA) forms a coiled coil.

The chain is Protein ITPRID1 (Itprid1) from Mus musculus (Mouse).